The primary structure comprises 458 residues: cAMP-dependent protein kinase regulatory subunit (458 aa).

The tract at residues 28–222 is dimerization and phosphorylation; the sequence is QFAANYFNKK…GLESAVGKNF (195 aa). Ser-184 is subject to Phosphoserine. 3',5'-cyclic AMP is bound by residues 223–338, Glu-288, Arg-297, 341–457, Glu-407, and Arg-416; these read LFNK…FLKS and LLKS…RADK.

Belongs to the cAMP-dependent kinase regulatory chain family. As to quaternary structure, tetramer, composed of 2 regulatory (R) and 2 catalytic (C) subunits. In the presence of cAMP it dissociates into 2 active monomeric C subunits and an R dimer.

This chain is cAMP-dependent protein kinase regulatory subunit (PKAR), found in Eremothecium gossypii (strain ATCC 10895 / CBS 109.51 / FGSC 9923 / NRRL Y-1056) (Yeast).